Consider the following 373-residue polypeptide: Inhibitor of nuclear factor kappa-B kinase-interacting protein (373 aa).

Positions 1–11 (MSEVKSRKKPG) are enriched in basic residues. Residues 1–38 (MSEVKSRKKPGPKVAAPEPEKRSDGRKNPEARGGAGWA) are disordered. Over residues 18–30 (EPEKRSDGRKNPE) the composition is skewed to basic and acidic residues. A helical transmembrane segment spans residues 43 to 59 (GLSLLSLATSLGLAWLV). Coiled-coil stretches lie at residues 64–257 (EKFA…DKLS) and 290–325 (TERKMEELTVQMFNMEDDMLKAVSEIMEMQNTLEGI). The N-linked (GlcNAc...) asparagine glycan is linked to asparagine 151.

Post-translationally, N-glycosylated at Asn-151.

The protein localises to the endoplasmic reticulum membrane. Its function is as follows. Target of p53/TP53 with pro-apoptotic function. The chain is Inhibitor of nuclear factor kappa-B kinase-interacting protein (Ikbip) from Rattus norvegicus (Rat).